A 60-amino-acid chain; its full sequence is Large ribosomal subunit protein bL32 (60 aa).

A disordered region spans residues 1–60; the sequence is MAVQQNKKSPSKRGMHRSHNALTVPGIAVESTTGETHLRHHISPTGFYRGRKVLKTKSEA. 2 stretches are compositionally biased toward basic residues: residues 9–19 and 49–60; these read SPSKRGMHRSH and RGRKVLKTKSEA.

This sequence belongs to the bacterial ribosomal protein bL32 family.

The protein is Large ribosomal subunit protein bL32 of Polaromonas sp. (strain JS666 / ATCC BAA-500).